A 545-amino-acid chain; its full sequence is Chaperonin GroEL 2 (545 aa).

Residues 30-33 (TLGP), Lys51, 87-91 (DGTTT), Gly415, and Asp496 contribute to the ATP site.

This sequence belongs to the chaperonin (HSP60) family. As to quaternary structure, forms a cylinder of 14 subunits composed of two heptameric rings stacked back-to-back. Interacts with the co-chaperonin GroES.

The protein resides in the cytoplasm. The enzyme catalyses ATP + H2O + a folded polypeptide = ADP + phosphate + an unfolded polypeptide.. In terms of biological role, together with its co-chaperonin GroES, plays an essential role in assisting protein folding. The GroEL-GroES system forms a nano-cage that allows encapsulation of the non-native substrate proteins and provides a physical environment optimized to promote and accelerate protein folding. The chain is Chaperonin GroEL 2 from Nitrobacter winogradskyi (strain ATCC 25391 / DSM 10237 / CIP 104748 / NCIMB 11846 / Nb-255).